Here is a 1262-residue protein sequence, read N- to C-terminus: Isoleucine--tRNA ligase, cytoplasmic (1262 aa).

Met1 bears the N-acetylmethionine mark. Residues 48-58 carry the 'HIGH' region motif; the sequence is PFATGLPHYGH. A 'KMSKS' region motif is present at residues 600 to 604; sequence KMSKR. Lys603 provides a ligand contact to ATP. At Ser1049 the chain carries Phosphoserine. Position 1058 is a phosphothreonine (Thr1058).

Belongs to the class-I aminoacyl-tRNA synthetase family. As to quaternary structure, part of a multisubunit complex that groups tRNA ligases for Arg (RARS1), Asp (DARS1), Gln (QARS1), Ile (IARS1), Leu (LARS1), Lys (KARS1), Met (MARS1) the bifunctional ligase for Glu and Pro (EPRS1) and the auxiliary subunits AIMP1/p43, AIMP2/p38 and EEF1E1/p18.

Its subcellular location is the cytoplasm. The protein localises to the cytosol. It catalyses the reaction tRNA(Ile) + L-isoleucine + ATP = L-isoleucyl-tRNA(Ile) + AMP + diphosphate. Its function is as follows. Catalyzes the specific attachment of an amino acid to its cognate tRNA in a 2 step reaction: the amino acid (AA) is first activated by ATP to form AA-AMP and then transferred to the acceptor end of the tRNA. In Mus musculus (Mouse), this protein is Isoleucine--tRNA ligase, cytoplasmic (Iars1).